Here is a 236-residue protein sequence, read N- to C-terminus: Three prime repair exonuclease 2 (236 aa).

Residues aspartate 14 and glutamate 16 each contribute to the Mg(2+) site. Substrate-binding positions include 16-17 (EA) and tyrosine 122. Histidine 188 serves as the catalytic Proton donor/acceptor. Aspartate 193 serves as a coordination point for Mg(2+). Position 193 (aspartate 193) interacts with substrate.

The protein belongs to the exonuclease superfamily. TREX family. In terms of assembly, homodimer. The cofactor is Mg(2+). Detected in heart, breast, prostate, skeletal muscle, testis, uterus, bone marrow, colon, small intestine, stomach and thymus.

The protein resides in the nucleus. The enzyme catalyses Exonucleolytic cleavage in the 3'- to 5'-direction to yield nucleoside 5'-phosphates.. Its function is as follows. Exonuclease with a preference for double-stranded DNA with mismatched 3' termini. May play a role in DNA repair. This chain is Three prime repair exonuclease 2 (TREX2), found in Homo sapiens (Human).